We begin with the raw amino-acid sequence, 485 residues long: Outer membrane protein OprM (485 aa).

Positions 1–17 are cleaved as a signal peptide; sequence MKRSFLSLAVAAVVLSG. Cysteine 18 carries the N-palmitoyl cysteine lipid modification. Cysteine 18 carries the S-diacylglycerol cysteine lipid modification.

The protein belongs to the outer membrane factor (OMF) (TC 1.B.17) family. As to quaternary structure, component of the MexAB-OprM multidrug efflux complex, composed of six MexA subunits forming a hexameric tube, binding to a MexB trimer, which interact with the trimeric OprM outer membrane channel protein. The OprM homotrimer forms a 135 Angstroms-long pore. It consists of a beta-barrel, which is probably inserted in the outer membrane, and an alpha-barrel formed by alpha-helices which probably spans the periplasm. In the ground state the periplasmic end is closed, while the outer membrane end opening is 6-8 Angstroms in diameter. OprM does not directly contact MexB; instead, MexA joins MexB and OprM by forming a funnel-like hexamer anchored to the inner membrane. MexA may initially form a hexameric ring complex with MexB prior to OprM, then OprM undergoes a conformational change as it contacts MexA, allowing the periplasmic gate to open. It is thought that, under high intracellular substrate concentration, MexB ejects substrate into the tunnel formed by MexA-OprM; as the substrate level declines, conformational changes in MexB cause efflux to reduce and stop and the complex shifts to the closed state. MexB subunit acts as a substrate:proton antiporter and activity is enhanced significantly when in complex with MexA and OprM, in vitro.

Its subcellular location is the cell outer membrane. With respect to regulation, export of antibiotics and solvents is dramatically decreased in the presence of the protonophore carbonyl cyanide m-chlorophenylhydrazone (CCCP), therefore may be driven by a proton gradient. Antibiotic efflux is inhibited by pyridopyrimidine derivatives, such as ABI-PP, acting by binding to a hydrophobic pocket in MexB. In terms of biological role, the outer membrane component of the MexAB-OprM efflux system that confers multidrug resistance. Functions as the major efflux pump for n-hexane and p-xylene efflux. Has been shown in one study to be involved in the active efflux of the autoinducer N-(3-oxododecanoyl) homoserine lactone, thereby playing an indirect role in quorum-sensing; but has been shown in another study not to be involved in efflux of this autoinducer. Over-expression of the pump increases antibiotic and solvent efflux capacities. Can replace the OprJ outer membrane component of the MexCD-OprJ pump; the antibiotics exported are those exported by the intact MexCD pump, showing that efflux substrate specificity is not conferred by this component. Serves as the outer membrane component for the MexXY efflux system. Implicated in the secretion of the siderophore pyoverdine. OprM is probably involved in the efflux of the siderophore across the outer membrane. This chain is Outer membrane protein OprM (oprM), found in Pseudomonas aeruginosa (strain ATCC 15692 / DSM 22644 / CIP 104116 / JCM 14847 / LMG 12228 / 1C / PRS 101 / PAO1).